The chain runs to 109 residues: Cell division protein ZapA (109 aa).

Residues 21 to 99 are a coiled coil; the sequence is PEQQEALNQA…IEQALLEQGK (79 aa).

The protein belongs to the ZapA family. Type 1 subfamily. Homodimer. Interacts with FtsZ.

The protein resides in the cytoplasm. Its function is as follows. Activator of cell division through the inhibition of FtsZ GTPase activity, therefore promoting FtsZ assembly into bundles of protofilaments necessary for the formation of the division Z ring. It is recruited early at mid-cell but it is not essential for cell division. In Pectobacterium atrosepticum (strain SCRI 1043 / ATCC BAA-672) (Erwinia carotovora subsp. atroseptica), this protein is Cell division protein ZapA.